Here is a 247-residue protein sequence, read N- to C-terminus: MSHRDTLFSAPIASLGDWTFDERVAEVFPDMIQRSVPGYSNIISMIGMLAERFVQPNTQVYDLGCSLGAATLSVRRNISHPGCRIIAIDNSPAMVERCRRHIDAYKAPTPVEVIEGDIRDVAIENASLVILNFTIQFLEPGDRQAILNKVYQGLNPGGALVLSEKFSFEDAHVGELLFNMHHDFKRANGYSELEISQKRSMLENVMLTDSVETHKARLRQAGFEHAELWFQCFNFGSLVAVKSGEQA.

Residues Tyr39, 64–66 (GCS), 89–90 (DN), 117–118 (DI), Asn132, and Arg199 each bind S-adenosyl-L-methionine.

Belongs to the class I-like SAM-binding methyltransferase superfamily. Cx-SAM synthase family. Homodimer.

The catalysed reaction is prephenate + S-adenosyl-L-methionine = carboxy-S-adenosyl-L-methionine + 3-phenylpyruvate + H2O. Its function is as follows. Catalyzes the conversion of S-adenosyl-L-methionine (SAM) to carboxy-S-adenosyl-L-methionine (Cx-SAM). This is Carboxy-S-adenosyl-L-methionine synthase from Klebsiella pneumoniae (strain 342).